A 396-amino-acid chain; its full sequence is 2,3-diketo-5-methylthiopentyl-1-phosphate enolase (396 aa).

The active-site Proton acceptor is K85. Substrate is bound by residues K134, 160–163 (KDDE), H251, G323, and 345–346 (GG). Mg(2+) contacts are provided by K160, D162, and E163. N6-carboxylysine is present on K160.

This sequence belongs to the RuBisCO large chain family. Type IV subfamily. As to quaternary structure, homodimer. Mg(2+) is required as a cofactor.

It catalyses the reaction 5-methylsulfanyl-2,3-dioxopentyl phosphate = 2-hydroxy-5-methylsulfanyl-3-oxopent-1-enyl phosphate. Its pathway is amino-acid biosynthesis; L-methionine biosynthesis via salvage pathway; L-methionine from S-methyl-5-thio-alpha-D-ribose 1-phosphate: step 3/6. Its function is as follows. Catalyzes the enolization of 2,3-diketo-5-methylthiopentyl-1-phosphate (DK-MTP-1-P) into 2-hydroxy-3-keto-5-methylthiopentenyl-1-phosphate (HK-MTPenyl-1-P). This is 2,3-diketo-5-methylthiopentyl-1-phosphate enolase from Exiguobacterium sibiricum (strain DSM 17290 / CCUG 55495 / CIP 109462 / JCM 13490 / 255-15).